A 178-amino-acid polypeptide reads, in one-letter code: MSRIGKQPISIPNGLDVSLKGSVLVFKKGNNTKELDTKGNVNIEVKDGNIIFTSKGDDRQSRAYWGTYRALANNVVVGLTTGFTKQLEINGVGYKAAAKGKVLELALGFSHPINYELPEGIEISVEKNIITIKGSDKQVVGQVAAEVRGFRPPEPYKGKGVKYAEERIIRKAGKTSKK.

Belongs to the universal ribosomal protein uL6 family. As to quaternary structure, part of the 50S ribosomal subunit.

Its function is as follows. This protein binds to the 23S rRNA, and is important in its secondary structure. It is located near the subunit interface in the base of the L7/L12 stalk, and near the tRNA binding site of the peptidyltransferase center. The protein is Large ribosomal subunit protein uL6 of Campylobacter fetus subsp. fetus (strain 82-40).